Reading from the N-terminus, the 497-residue chain is Probable cytosol aminopeptidase (497 aa).

2 residues coordinate Mn(2+): lysine 267 and aspartate 272. The active site involves lysine 279. Mn(2+) contacts are provided by aspartate 290, aspartate 349, and glutamate 351. The active site involves arginine 353.

The protein belongs to the peptidase M17 family. It depends on Mn(2+) as a cofactor.

The protein resides in the cytoplasm. The catalysed reaction is Release of an N-terminal amino acid, Xaa-|-Yaa-, in which Xaa is preferably Leu, but may be other amino acids including Pro although not Arg or Lys, and Yaa may be Pro. Amino acid amides and methyl esters are also readily hydrolyzed, but rates on arylamides are exceedingly low.. It carries out the reaction Release of an N-terminal amino acid, preferentially leucine, but not glutamic or aspartic acids.. Functionally, presumably involved in the processing and regular turnover of intracellular proteins. Catalyzes the removal of unsubstituted N-terminal amino acids from various peptides. The polypeptide is Probable cytosol aminopeptidase (Pseudomonas putida (strain GB-1)).